The following is a 78-amino-acid chain: MTDTTPNSAPEEPEITYEAARDELVEIVTRLESGGISLAETMTLWERGEKLADICQSWLNGARARIEAARSDAETAQP.

Belongs to the XseB family. As to quaternary structure, heterooligomer composed of large and small subunits.

It is found in the cytoplasm. The enzyme catalyses Exonucleolytic cleavage in either 5'- to 3'- or 3'- to 5'-direction to yield nucleoside 5'-phosphates.. Functionally, bidirectionally degrades single-stranded DNA into large acid-insoluble oligonucleotides, which are then degraded further into small acid-soluble oligonucleotides. This chain is Exodeoxyribonuclease 7 small subunit, found in Cutibacterium acnes (strain DSM 16379 / KPA171202) (Propionibacterium acnes).